Here is a 246-residue protein sequence, read N- to C-terminus: MKICIFFTLLGTVAAFPTEDNDDRIVGGYTCQEHSVPYQVSLNAGSHICGGSLITDQWVLSAAHCYHPQLQVRLGEHNIYEIEGAEQFIDAAKMILHPDYDKWTVDNDIMLIKLKSPATLNSKVSTIPLPQYCPTAGTECLVSGWGVLKFGFESPSVLQCLDAPVLSDSVCHKAYPRQITNNMFCLGFLEGGKDSCQYDSGGPVVCNGEVQGIVSWGDGCALEGKPGVYTKVCNYLNWIQQTVAAN.

Residues 1 to 15 form the signal peptide; it reads MKICIFFTLLGTVAA. Positions 16–24 are cleaved as a propeptide — activation peptide; it reads FPTEDNDDR. One can recognise a Peptidase S1 domain in the interval 25–244; it reads IVGGYTCQEH…YLNWIQQTVA (220 aa). Intrachain disulfides connect Cys31–Cys160, Cys49–Cys65, Cys133–Cys233, Cys140–Cys206, Cys171–Cys185, and Cys196–Cys220. Catalysis depends on His64, which acts as the Charge relay system. Ca(2+) is bound by residues Glu76, Asn78, and Glu86. Asp108 acts as the Charge relay system in catalysis. The Charge relay system role is filled by Ser200.

This sequence belongs to the peptidase S1 family. Ca(2+) is required as a cofactor.

It is found in the secreted. The protein resides in the extracellular space. The enzyme catalyses Preferential cleavage: Arg-|-Xaa, Lys-|-Xaa.. The protein is Trypsin V-B of Rattus norvegicus (Rat).